A 134-amino-acid polypeptide reads, in one-letter code: ATP synthase epsilon chain (134 aa).

Belongs to the ATPase epsilon chain family. As to quaternary structure, F-type ATPases have 2 components, CF(1) - the catalytic core - and CF(0) - the membrane proton channel. CF(1) has five subunits: alpha(3), beta(3), gamma(1), delta(1), epsilon(1). CF(0) has three main subunits: a, b and c.

The protein localises to the cell membrane. Produces ATP from ADP in the presence of a proton gradient across the membrane. This chain is ATP synthase epsilon chain, found in Alkaliphilus metalliredigens (strain QYMF).